The sequence spans 75 residues: Calhepatin (75 aa).

Residue Ser1 is modified to N-acetylserine. EF-hand domains lie at 2-37 (ADEQ…VHPK) and 38-73 (VSRN…LADL). Ca(2+)-binding residues include Asp15, Asp17, Ser19, Thr21, Glu26, Asp51, Asn53, Asp55, Gln57, and Glu62.

In terms of assembly, monomer and homodimer. In terms of tissue distribution, liver, and to a much lower level intestine.

Its function is as follows. Binds both calcium and copper, but not zinc. May be involved in calcium signal transduction. The sequence is that of Calhepatin from Lepidosiren paradoxus (South American lungfish).